A 320-amino-acid chain; its full sequence is Aspartate carbamoyltransferase catalytic subunit (320 aa).

Positions 53 and 54 each coordinate carbamoyl phosphate. L-aspartate is bound at residue K82. Carbamoyl phosphate is bound by residues R103, H131, and Q134. R164 and R227 together coordinate L-aspartate. The carbamoyl phosphate site is built by L266 and P267.

Belongs to the aspartate/ornithine carbamoyltransferase superfamily. ATCase family. As to quaternary structure, heterododecamer (2C3:3R2) of six catalytic PyrB chains organized as two trimers (C3), and six regulatory PyrI chains organized as three dimers (R2).

It catalyses the reaction carbamoyl phosphate + L-aspartate = N-carbamoyl-L-aspartate + phosphate + H(+). Its pathway is pyrimidine metabolism; UMP biosynthesis via de novo pathway; (S)-dihydroorotate from bicarbonate: step 2/3. Its function is as follows. Catalyzes the condensation of carbamoyl phosphate and aspartate to form carbamoyl aspartate and inorganic phosphate, the committed step in the de novo pyrimidine nucleotide biosynthesis pathway. This Bifidobacterium adolescentis (strain ATCC 15703 / DSM 20083 / NCTC 11814 / E194a) protein is Aspartate carbamoyltransferase catalytic subunit.